Reading from the N-terminus, the 693-residue chain is Polyribonucleotide nucleotidyltransferase (693 aa).

Mg(2+)-binding residues include Asp-485 and Asp-491. Residues 552-611 (PRIMVLEINPSKIGDLIGPSGKNIKKIIEETHTTINIKPEGLVYISAPDQESAEKAAQMV) form the KH domain. Residues 621–691 (GDIFLGKVIR…SSGRISLTRK (71 aa)) enclose the S1 motif domain.

The protein belongs to the polyribonucleotide nucleotidyltransferase family. It depends on Mg(2+) as a cofactor.

It localises to the cytoplasm. The catalysed reaction is RNA(n+1) + phosphate = RNA(n) + a ribonucleoside 5'-diphosphate. Functionally, involved in mRNA degradation. Catalyzes the phosphorolysis of single-stranded polyribonucleotides processively in the 3'- to 5'-direction. The sequence is that of Polyribonucleotide nucleotidyltransferase from Dictyoglomus thermophilum (strain ATCC 35947 / DSM 3960 / H-6-12).